The primary structure comprises 73 residues: uncharacterized protein (73 aa).

A coiled-coil region spans residues 20 to 49; sequence NATYNKNLELEKRLAKIRNEIPNKSKLIAT.

This is an uncharacterized protein from Acheta domesticus (House cricket).